The chain runs to 257 residues: 6-phosphogluconolactonase (257 aa).

At alanine 2 the chain carries N-acetylalanine. Residue serine 49 is modified to Phosphoserine. Residue lysine 180 is modified to N6-acetyllysine.

Belongs to the glucosamine/galactosamine-6-phosphate isomerase family. 6-phosphogluconolactonase subfamily.

It is found in the cytoplasm. It catalyses the reaction 6-phospho-D-glucono-1,5-lactone + H2O = 6-phospho-D-gluconate + H(+). Its pathway is carbohydrate degradation; pentose phosphate pathway; D-ribulose 5-phosphate from D-glucose 6-phosphate (oxidative stage): step 2/3. In terms of biological role, hydrolysis of 6-phosphogluconolactone to 6-phosphogluconate. This is 6-phosphogluconolactonase from Rattus norvegicus (Rat).